Reading from the N-terminus, the 178-residue chain is Mediator of RNA polymerase II transcription subunit 28 (178 aa).

Residues 1 to 44 (MAAPLGGMFSGQPPGPPQAPPGLPGQASLLQAAPGAPRPSSSTL) are disordered. Pro residues predominate over residues 13-23 (PPGPPQAPPGL). Positions 109-145 (QVIKEDVSELRNELQRKDALVQKHLTKLRHWQQVLED) form a coiled coil.

This sequence belongs to the Mediator complex subunit 28 family. As to quaternary structure, component of the Mediator complex, which is composed of MED1, MED4, MED6, MED7, MED8, MED9, MED10, MED11, MED12, MED13, MED13L, MED14, MED15, MED16, MED17, MED18, MED19, MED20, MED21, MED22, MED23, MED24, MED25, MED26, MED27, MED29, MED30, MED31, CCNC, CDK8 and CDC2L6/CDK11. The MED12, MED13, CCNC and CDK8 subunits form a distinct module termed the CDK8 module. Mediator containing the CDK8 module is less active than Mediator lacking this module in supporting transcriptional activation. Individual preparations of the Mediator complex lacking one or more distinct subunits have been variously termed ARC, CRSP, DRIP, PC2, SMCC and TRAP. Forms a ternary complex with NF2/merlin and GRB2. Binds to actin. Widely expressed. Highly expressed in vascular tissues such as placenta, testis and liver.

The protein resides in the nucleus. Its subcellular location is the cytoplasm. It localises to the membrane. Functionally, component of the Mediator complex, a coactivator involved in the regulated transcription of nearly all RNA polymerase II-dependent genes. Mediator functions as a bridge to convey information from gene-specific regulatory proteins to the basal RNA polymerase II transcription machinery. Mediator is recruited to promoters by direct interactions with regulatory proteins and serves as a scaffold for the assembly of a functional preinitiation complex with RNA polymerase II and the general transcription factors. May be part of a complex containing NF2/merlin that participates in cellular signaling to the actin cytoskeleton downstream of tyrosine kinase signaling pathways. The protein is Mediator of RNA polymerase II transcription subunit 28 (MED28) of Homo sapiens (Human).